The sequence spans 416 residues: UDP-N-acetylmuramoylalanine--D-glutamate ligase (416 aa).

104-110 (GSNGKST) is an ATP binding site.

This sequence belongs to the MurCDEF family.

The protein localises to the cytoplasm. It catalyses the reaction UDP-N-acetyl-alpha-D-muramoyl-L-alanine + D-glutamate + ATP = UDP-N-acetyl-alpha-D-muramoyl-L-alanyl-D-glutamate + ADP + phosphate + H(+). The protein operates within cell wall biogenesis; peptidoglycan biosynthesis. In terms of biological role, cell wall formation. Catalyzes the addition of glutamate to the nucleotide precursor UDP-N-acetylmuramoyl-L-alanine (UMA). The polypeptide is UDP-N-acetylmuramoylalanine--D-glutamate ligase (Francisella tularensis subsp. mediasiatica (strain FSC147)).